The primary structure comprises 244 residues: 3-oxoacyl-[acyl-carrier-protein] reductase FabG (244 aa).

NADP(+) contacts are provided by residues 12–15 (GASR), Thr37, 59–60 (NV), and Asn86. Residue Ser138 coordinates substrate. Tyr151 serves as the catalytic Proton acceptor. NADP(+)-binding positions include 151-155 (YAAAK) and Ile184.

It belongs to the short-chain dehydrogenases/reductases (SDR) family. In terms of assembly, homotetramer.

It catalyses the reaction a (3R)-hydroxyacyl-[ACP] + NADP(+) = a 3-oxoacyl-[ACP] + NADPH + H(+). Its pathway is lipid metabolism; fatty acid biosynthesis. In terms of biological role, catalyzes the NADPH-dependent reduction of beta-ketoacyl-ACP substrates to beta-hydroxyacyl-ACP products, the first reductive step in the elongation cycle of fatty acid biosynthesis. The chain is 3-oxoacyl-[acyl-carrier-protein] reductase FabG (fabG) from Vibrio cholerae serotype O1 (strain ATCC 39315 / El Tor Inaba N16961).